Here is a 103-residue protein sequence, read N- to C-terminus: uncharacterized protein (103 aa).

Residues 1–13 (MLLSSIVSFVADA) form the signal peptide. Asn-67 carries an N-linked (GlcNAc...) asparagine glycan. Positions 73–103 (LSSDSNRNIIDNSNNNQHPSSSSTSTSWKKF) are disordered.

The protein resides in the secreted. This is an uncharacterized protein from Dictyostelium discoideum (Social amoeba).